The following is a 420-amino-acid chain: Type II methyltransferase M.HgiCI (420 aa).

The 416-residue stretch at 2–417 (LKFIDLFAGI…LDLFKSADLA (416 aa)) folds into the SAM-dependent MTase C5-type domain. Cys-75 is an active-site residue.

The protein belongs to the class I-like SAM-binding methyltransferase superfamily. C5-methyltransferase family.

The enzyme catalyses a 2'-deoxycytidine in DNA + S-adenosyl-L-methionine = a 5-methyl-2'-deoxycytidine in DNA + S-adenosyl-L-homocysteine + H(+). A methylase that recognizes the double-stranded sequence 5'-GGYRCC-3', methylates C-5 on both strands, and protects the DNA from cleavage by the HgiCI endonuclease. The protein is Type II methyltransferase M.HgiCI (hgiCIM) of Herpetosiphon aurantiacus (Herpetosiphon giganteus).